A 362-amino-acid chain; its full sequence is Leucoanthocyanidin dioxygenase (362 aa).

The tract at residues 1-23 (MVTSAMGPSPRVEELARSGLDTI) is disordered. The Fe2OG dioxygenase domain occupies 214–313 (LIVQMKINFY…RISWAVFCEP (100 aa)). The Fe cation site is built by His-238, Asp-240, and His-294. Residue Arg-304 is part of the active site.

It belongs to the iron/ascorbate-dependent oxidoreductase family. The cofactor is Fe cation. L-ascorbate is required as a cofactor. In terms of tissue distribution, expressed in red but not in green forma of P.frutescens. In red forma, it is predominantly expressed in stems and leaves, but not in roots.

It carries out the reaction a (2R,3S,4S)-leucoanthocyanidin + 2-oxoglutarate + O2 = a 4-H-anthocyanidin with a 3-hydroxy group + succinate + CO2 + 2 H2O. The protein operates within pigment biosynthesis; anthocyanin biosynthesis. In terms of biological role, oxidation of leucoanthocyanidins into anthocyanidins. The polypeptide is Leucoanthocyanidin dioxygenase (ANS) (Perilla frutescens (Beefsteak mint)).